We begin with the raw amino-acid sequence, 315 residues long: Methenyltetrahydromethanopterin cyclohydrolase (315 aa).

This sequence belongs to the MCH family.

The protein localises to the cytoplasm. The catalysed reaction is 5,10-methenyl-5,6,7,8-tetrahydromethanopterin + H2O = N(5)-formyl-5,6,7,8-tetrahydromethanopterin + H(+). It functions in the pathway one-carbon metabolism; methanogenesis from CO(2); 5,10-methenyl-5,6,7,8-tetrahydromethanopterin from CO(2): step 3/3. Catalyzes the reversible interconversion of 5-formyl-H(4)MPT to methenyl-H(4)MPT(+). This is Methenyltetrahydromethanopterin cyclohydrolase from Methanoculleus marisnigri (strain ATCC 35101 / DSM 1498 / JR1).